A 440-amino-acid chain; its full sequence is Xaa-Pro dipeptidase (440 aa).

Residues Asp244, Asp255, His335, Glu380, and Glu419 each contribute to the Mn(2+) site.

The protein belongs to the peptidase M24B family. Bacterial-type prolidase subfamily. Requires Mn(2+) as cofactor.

The catalysed reaction is Xaa-L-Pro dipeptide + H2O = an L-alpha-amino acid + L-proline. Functionally, splits dipeptides with a prolyl residue in the C-terminal position. This Shewanella piezotolerans (strain WP3 / JCM 13877) protein is Xaa-Pro dipeptidase.